Consider the following 212-residue polypeptide: MTPAPPFLQATALACERDWRVLFENLDLHLCAGDMLQVSGPNGSGKTSLLRLLCGLMQPTAGQVLLNGQVLGRQRAPGCDLLWLGHAPALKDLLTPLENLAWLCALHQPAGADAIGHALNAVGLAGFEDVPCHTLSAGQQRRVALARLHLPGPSLWILDEPFTALDQQGIAQLENHLADHCEQGGMVVITTHHTLSRLPAGYRSIDLAKGSA.

The region spanning 8–212 (LQATALACER…RSIDLAKGSA (205 aa)) is the ABC transporter domain. 40-47 (GPNGSGKT) is an ATP binding site.

This sequence belongs to the ABC transporter superfamily. CcmA exporter (TC 3.A.1.107) family. The complex is composed of two ATP-binding proteins (CcmA) and two transmembrane proteins (CcmB).

It localises to the cell inner membrane. The enzyme catalyses heme b(in) + ATP + H2O = heme b(out) + ADP + phosphate + H(+). Part of the ABC transporter complex CcmAB involved in the biogenesis of c-type cytochromes; once thought to export heme, this seems not to be the case, but its exact role is uncertain. Responsible for energy coupling to the transport system. The polypeptide is Cytochrome c biogenesis ATP-binding export protein CcmA (Pseudomonas syringae pv. tomato (strain ATCC BAA-871 / DC3000)).